The sequence spans 64 residues: uncharacterized protein (64 aa).

The chain crosses the membrane as a helical span at residues 30-52 (FYAIFEMLFWPLVSLISVGLLGE).

The protein localises to the membrane. This is an uncharacterized protein from Archaeoglobus fulgidus (strain ATCC 49558 / DSM 4304 / JCM 9628 / NBRC 100126 / VC-16).